Consider the following 633-residue polypeptide: Probable methyltransferase PMT15 (633 aa).

Residues 1-24 (MGNYRWPSKLSKLSLRAKQTNLYR) lie on the Cytoplasmic side of the membrane. The chain crosses the membrane as a helical; Signal-anchor for type II membrane protein span at residues 25-45 (VILIAILCVTFYFVGVWQHSG). Over 46–633 (RGISRSSISN…APAPDQSSDP (588 aa)) the chain is Lumenal. Asn-113 and Asn-298 each carry an N-linked (GlcNAc...) asparagine glycan.

This sequence belongs to the methyltransferase superfamily.

The protein resides in the golgi apparatus membrane. This chain is Probable methyltransferase PMT15, found in Arabidopsis thaliana (Mouse-ear cress).